The following is a 209-amino-acid chain: uncharacterized protein (209 aa).

Residues 177 to 209 (DNSDNSSDSDDSDSLDGSDDLNDSDNVDNLFVG) form a disordered region. Over residues 183–202 (SDSDDSDSLDGSDDLNDSDN) the composition is skewed to acidic residues.

This is an uncharacterized protein from Acanthamoeba polyphaga (Amoeba).